A 169-amino-acid polypeptide reads, in one-letter code: Crossover junction endodeoxyribonuclease RuvC (169 aa).

Active-site residues include D11, E71, and D143. Positions 11, 71, and 143 each coordinate Mg(2+).

It belongs to the RuvC family. Homodimer which binds Holliday junction (HJ) DNA. The HJ becomes 2-fold symmetrical on binding to RuvC with unstacked arms; it has a different conformation from HJ DNA in complex with RuvA. In the full resolvosome a probable DNA-RuvA(4)-RuvB(12)-RuvC(2) complex forms which resolves the HJ. Mg(2+) is required as a cofactor.

It localises to the cytoplasm. The catalysed reaction is Endonucleolytic cleavage at a junction such as a reciprocal single-stranded crossover between two homologous DNA duplexes (Holliday junction).. Its function is as follows. The RuvA-RuvB-RuvC complex processes Holliday junction (HJ) DNA during genetic recombination and DNA repair. Endonuclease that resolves HJ intermediates. Cleaves cruciform DNA by making single-stranded nicks across the HJ at symmetrical positions within the homologous arms, yielding a 5'-phosphate and a 3'-hydroxyl group; requires a central core of homology in the junction. The consensus cleavage sequence is 5'-(A/T)TT(C/G)-3'. Cleavage occurs on the 3'-side of the TT dinucleotide at the point of strand exchange. HJ branch migration catalyzed by RuvA-RuvB allows RuvC to scan DNA until it finds its consensus sequence, where it cleaves and resolves the cruciform DNA. This chain is Crossover junction endodeoxyribonuclease RuvC, found in Bartonella quintana (strain Toulouse) (Rochalimaea quintana).